The sequence spans 289 residues: ATP phosphoribosyltransferase (289 aa).

This sequence belongs to the ATP phosphoribosyltransferase family. Long subfamily. Mg(2+) serves as cofactor.

The protein resides in the cytoplasm. It carries out the reaction 1-(5-phospho-beta-D-ribosyl)-ATP + diphosphate = 5-phospho-alpha-D-ribose 1-diphosphate + ATP. The protein operates within amino-acid biosynthesis; L-histidine biosynthesis; L-histidine from 5-phospho-alpha-D-ribose 1-diphosphate: step 1/9. Its activity is regulated as follows. Feedback inhibited by histidine. Catalyzes the condensation of ATP and 5-phosphoribose 1-diphosphate to form N'-(5'-phosphoribosyl)-ATP (PR-ATP). Has a crucial role in the pathway because the rate of histidine biosynthesis seems to be controlled primarily by regulation of HisG enzymatic activity. This chain is ATP phosphoribosyltransferase, found in Solibacter usitatus (strain Ellin6076).